The sequence spans 259 residues: Global transcriptional regulator CodY (259 aa).

Positions 1–155 (MDLLTRTRKI…GATVVGMEIL (155 aa)) are GAF domain. Residues 203–222 (ASKIADRVGITRSVIVNALR) constitute a DNA-binding region (H-T-H motif). The residue at position 215 (Ser-215) is a Phosphoserine.

Belongs to the CodY family.

It localises to the cytoplasm. DNA-binding global transcriptional regulator which is involved in the adaptive response to starvation and acts by directly or indirectly controlling the expression of numerous genes in response to nutrient availability. During rapid exponential growth, CodY is highly active and represses genes whose products allow adaptation to nutrient depletion. This Shouchella clausii (strain KSM-K16) (Alkalihalobacillus clausii) protein is Global transcriptional regulator CodY.